The primary structure comprises 123 residues: MIQMQSMLDAADNSGARSVMCIKVLGGSHRRYAHIGDVIKVTVKEAIPRGKVKKGDVLKAVVVRTRKGVRRPDGSVIRFDRNACVLLNNNTEQPIGTRIFGPVTRELRGDKFMKIVSLAPEVL.

This sequence belongs to the universal ribosomal protein uL14 family. As to quaternary structure, part of the 50S ribosomal subunit. Forms a cluster with proteins L3 and L19. In the 70S ribosome, L14 and L19 interact and together make contacts with the 16S rRNA in bridges B5 and B8.

In terms of biological role, binds to 23S rRNA. Forms part of two intersubunit bridges in the 70S ribosome. The polypeptide is Large ribosomal subunit protein uL14 (Vibrio vulnificus (strain CMCP6)).